The primary structure comprises 333 residues: Eukaryotic translation initiation factor 2 subunit 2 (333 aa).

Disordered regions lie at residues Met1 to Lys87, Ile98 to Leu117, and Glu141 to Pro165. Ser2 carries the N-acetylserine modification. Ser2 and Ser13 each carry phosphoserine. The span at Ser13–Pro22 shows a compositional bias: basic residues. Residue Thr36 is modified to Phosphothreonine. The span at Glu40–Asp51 shows a compositional bias: basic and acidic residues. Ser67 bears the Phosphoserine mark. A Glycyl lysine isopeptide (Lys-Gly) (interchain with G-Cter in SUMO2) cross-link involves residue Lys102. At Ser105 the chain carries Phosphoserine. Acidic residues predominate over residues Asp106–Leu117. Residues Ser158 and Ser218 each carry the phosphoserine modification. Residues Lys265 and Lys293 each carry the N6-acetyllysine modification. The segment at Cys281–Cys305 adopts a C4-type zinc-finger fold.

This sequence belongs to the eIF-2-beta/eIF-5 family. As to quaternary structure, eukaryotic translation initiation factor 2 eIF2 is a heterotrimeric complex composed of an alpha (EIF2S1), a beta (EIF2S2) and a gamma (EIF2S3) chain. eIF2 is member of the 43S pre-initiation complex (43S PIC). eIF2 forms a complex with at least CELF1/CUGBP1, CALR, CALR3, EIF2S1, EIF2S2, HSP90B1 and HSPA5. Interacts with BZW2/5MP1. Interacts with EIF5.

Its subcellular location is the cytoplasm. The protein localises to the cytosol. Its function is as follows. Component of the eIF2 complex that functions in the early steps of protein synthesis by forming a ternary complex with GTP and initiator tRNA. This complex binds to a 40S ribosomal subunit, followed by mRNA binding to form a 43S pre-initiation complex (43S PIC). Junction of the 60S ribosomal subunit to form the 80S initiation complex is preceded by hydrolysis of the GTP bound to eIF2 and release of an eIF2-GDP binary complex. In order for eIF2 to recycle and catalyze another round of initiation, the GDP bound to eIF2 must exchange with GTP by way of a reaction catalyzed by eIF2B. This chain is Eukaryotic translation initiation factor 2 subunit 2 (EIF2S2), found in Bos taurus (Bovine).